The chain runs to 252 residues: Protein IL-40 (252 aa).

The first 18 residues, 1–18, serve as a signal peptide directing secretion; the sequence is MALLQLLLFAMLAACGFS. 2 N-linked (GlcNAc...) asparagine glycosylation sites follow: asparagine 82 and asparagine 177.

Expressed in bone marrow, spleen and lymph node.

It is found in the secreted. Its function is as follows. Probable B cell-associated cytokine that plays a role in the regulation of humoral immune responses. Involved in lymphocyte B cell development and immunoglobulin/IgA production. In Mus musculus (Mouse), this protein is Protein IL-40.